Here is a 188-residue protein sequence, read N- to C-terminus: EP300-interacting inhibitor of differentiation 1 (188 aa).

Residues methionine 1 to glycine 122 are disordered. Acidic residues-rich tracts occupy residues leucine 53–alanine 64 and phenylalanine 94–glutamine 117. Residues glutamate 55 to alanine 121 form an interaction with NR0B2 region. The LXCXE motif motif lies at leucine 179–glutamate 183.

In terms of assembly, interacts via its LXCXE motif with the entire pocket region of RB1. Interacts with EP300, NR0B2 and TRIM27.

It is found in the nucleus. Its subcellular location is the cytoplasm. In terms of biological role, interacts with RB1 and EP300 and acts as a repressor of MYOD1 transactivation. Inhibits EP300 and CBP histone acetyltransferase activity. May be involved in coupling cell cycle exit to the transcriptional activation of genes required for cellular differentiation. May act as a candidate coinhibitory factor for NR0B2 that can be directly linked to transcription inhibitory mechanisms. The sequence is that of EP300-interacting inhibitor of differentiation 1 from Pongo abelii (Sumatran orangutan).